The sequence spans 613 residues: Alkyldihydroxyacetonephosphate synthase (613 aa).

The region spanning 126-307 (IDRPPDAVIL…TEAVVKIERL (182 aa)) is the FAD-binding PCMH-type domain. Residues 158 to 164 (PFGGGTN), 228 to 234 (DSYAYST), 241 to 244 (ARGS), and 291 to 297 (EGAFGLV) contribute to the FAD site. Arg-437 provides a ligand contact to substrate. Tyr-498 (proton donor/acceptor) is an active-site residue. The segment at 534–536 (HHH) is important for enzyme activity. Positions 572 to 593 (NPGKLLPSPPSEKETPKATQAR) are disordered. A Microbody targeting signal motif is present at residues 611–613 (AHL).

This sequence belongs to the FAD-binding oxidoreductase/transferase type 4 family. As to quaternary structure, homodimer. Requires FAD as cofactor.

The protein localises to the peroxisome. It catalyses the reaction a long chain fatty alcohol + a 1-acylglycerone 3-phosphate = a 1-O-alkylglycerone 3-phosphate + a long-chain fatty acid + H(+). The protein operates within glycerolipid metabolism; ether lipid biosynthesis. Catalyzes the exchange of an acyl for a long-chain alkyl group and the formation of the ether bond in the biosynthesis of ether phospholipids. The chain is Alkyldihydroxyacetonephosphate synthase from Trypanosoma brucei brucei.